A 230-amino-acid polypeptide reads, in one-letter code: E3 ubiquitin-protein ligase RNF114 (230 aa).

The RING-type zinc finger occupies 31-70 (CPVCLEVYEKPVQVPCGHVFCSACLQECLKPKKPVCGVCR). Residues Cys-93 and Cys-96 each contribute to the Zn(2+) site. Residues 93–112 (CHGCRKNFFLSKIRAHVATC) form a C2HC RNF-type zinc finger. At Lys-104 the chain carries N6-acetyllysine. Zn(2+)-binding residues include His-108 and Cys-112. Lys-114 carries the post-translational modification N6-acetyllysine.

In terms of assembly, interacts with XAF1, the interaction increases XAF1 stability and proapoptotic effects, and may regulate IFN signaling. In terms of processing, autoubiquitinated. Polyubiquitinated in the presence of E2 enzymes UBE2D1, UBE2D2 and UBE2D3, but only monoubiquitinated in the presence of UBE2E1.

The protein resides in the cytoplasm. It is found in the nucleus. It carries out the reaction S-ubiquitinyl-[E2 ubiquitin-conjugating enzyme]-L-cysteine + [acceptor protein]-L-lysine = [E2 ubiquitin-conjugating enzyme]-L-cysteine + N(6)-ubiquitinyl-[acceptor protein]-L-lysine.. The protein operates within protein modification; protein ubiquitination. Functionally, E3 ubiquitin-protein ligase that promotes the ubiquitination of various substrates. In turn, participates in the regulation of many biological processes including cell cycle, apoptosis, osteoclastogenesis as well as innate or adaptive immunity. Acts as negative regulator of NF-kappa-B-dependent transcription by promoting the ubiquitination and stabilization of the NF-kappa-B inhibitor TNFAIP3. May promote the ubiquitination of TRAF6 as well. Also acts as a negative regulator of T-cell activation. Inhibits cellular dsRNA responses and interferon production by targeting MAVS component for proteasomal degradation. Ubiquitinates the CDK inhibitor CDKN1A leading to its degradationand probably also CDKN1B and CDKN1C. This activity stimulates cell cycle G1-to-S phase transition and suppresses cellular senescence. May play a role in spermatogenesis. This Bos taurus (Bovine) protein is E3 ubiquitin-protein ligase RNF114 (RNF114).